A 195-amino-acid polypeptide reads, in one-letter code: dCTP deaminase (195 aa).

Residues 110 to 115, D128, 136 to 138, Y171, K178, and Q182 contribute to the dCTP site; these read RSSLAR and VLE. The active-site Proton donor/acceptor is the E138.

This sequence belongs to the dCTP deaminase family. Homotrimer.

The catalysed reaction is dCTP + H2O + H(+) = dUTP + NH4(+). The protein operates within pyrimidine metabolism; dUMP biosynthesis; dUMP from dCTP (dUTP route): step 1/2. Its function is as follows. Catalyzes the deamination of dCTP to dUTP. This Idiomarina loihiensis (strain ATCC BAA-735 / DSM 15497 / L2-TR) protein is dCTP deaminase.